Here is a 183-residue protein sequence, read N- to C-terminus: Photosystem II extrinsic protein V (183 aa).

Residues 1–31 (MTFGHCRRASTLRSAFVLGLCGLLLAGCSGA) form the signal peptide. Heme c-binding residues include Cys-84, Cys-87, His-88, and Cys-138.

Belongs to the cytochrome c family. PsbV subfamily. In terms of assembly, PSII is composed of 1 copy each of membrane proteins PsbA, PsbB, PsbC, PsbD, PsbE, PsbF, PsbH, PsbI, PsbJ, PsbK, PsbL, PsbM, PsbT, PsbX, Psb30/Ycf12, peripheral proteins PsbO, CyanoQ (PsbQ), PsbU, PsbV and a large number of cofactors. It forms dimeric complexes. Heme c serves as cofactor.

It is found in the cell inner membrane. Probably one of the extrinsic, lumenal subunits of photosystem II (PSII). PSII is a light-driven water plastoquinone oxidoreductase, using light energy to abstract electrons from H(2)O, generating a proton gradient subsequently used for ATP formation. The extrinsic proteins stabilize the structure of photosystem II oxygen-evolving complex (OEC), the ion environment of oxygen evolution and protect the OEC against heat-induced inactivation. Low-potential cytochrome c that plays a role in the OEC of PSII. This is Photosystem II extrinsic protein V (psbV1) from Gloeobacter violaceus (strain ATCC 29082 / PCC 7421).